Consider the following 532-residue polypeptide: CTP synthase (532 aa).

Residues 1–269 (MNQASTRFIF…DTQILNHFNI (269 aa)) form an amidoligase domain region. Ser17 contributes to the CTP binding site. Ser17 lines the UTP pocket. ATP is bound by residues 18 to 23 (SLGKGL) and Asp75. Mg(2+)-binding residues include Asp75 and Glu143. CTP-binding positions include 150–152 (DIE), 190–195 (KTKPTQ), and Lys226. Residues 190–195 (KTKPTQ) and Lys226 each bind UTP. A Glutamine amidotransferase type-1 domain is found at 294–532 (NVAIIGKYIK…FISFIKASLD (239 aa)). Gly355 serves as a coordination point for L-glutamine. Cys382 functions as the Nucleophile; for glutamine hydrolysis in the catalytic mechanism. Residues 383–386 (MGMQ), Glu406, and Arg462 each bind L-glutamine. Active-site residues include His509 and Glu511.

This sequence belongs to the CTP synthase family. As to quaternary structure, homotetramer.

The enzyme catalyses UTP + L-glutamine + ATP + H2O = CTP + L-glutamate + ADP + phosphate + 2 H(+). It carries out the reaction L-glutamine + H2O = L-glutamate + NH4(+). The catalysed reaction is UTP + NH4(+) + ATP = CTP + ADP + phosphate + 2 H(+). It participates in pyrimidine metabolism; CTP biosynthesis via de novo pathway; CTP from UDP: step 2/2. Its activity is regulated as follows. Allosterically activated by GTP, when glutamine is the substrate; GTP has no effect on the reaction when ammonia is the substrate. The allosteric effector GTP functions by stabilizing the protein conformation that binds the tetrahedral intermediate(s) formed during glutamine hydrolysis. Inhibited by the product CTP, via allosteric rather than competitive inhibition. Catalyzes the ATP-dependent amination of UTP to CTP with either L-glutamine or ammonia as the source of nitrogen. Regulates intracellular CTP levels through interactions with the four ribonucleotide triphosphates. In Ehrlichia chaffeensis (strain ATCC CRL-10679 / Arkansas), this protein is CTP synthase.